The chain runs to 332 residues: Putative D-threonate 4-phosphate dehydrogenase (332 aa).

Substrate is bound by residues H140 and T141. Residues H170, H214, and H270 each contribute to the a divalent metal cation site. Substrate is bound by residues K278, N287, and R296.

It belongs to the PdxA family. PdxA2 subfamily. Homodimer. It depends on a divalent metal cation as a cofactor.

The catalysed reaction is 4-O-phospho-D-threonate + NAD(+) = dihydroxyacetone phosphate + CO2 + NADH. Its function is as follows. Catalyzes the NAD-dependent oxidation and subsequent decarboxylation of D-threonate 4-phosphate to produce dihydroxyacetone phosphate (DHAP). This is Putative D-threonate 4-phosphate dehydrogenase from Oceanobacillus iheyensis (strain DSM 14371 / CIP 107618 / JCM 11309 / KCTC 3954 / HTE831).